The sequence spans 277 residues: Large ribosomal subunit protein uL2 (277 aa).

The disordered stretch occupies residues 222–265 (GVAMNPIDHPHGGGEGRTSGGRHPVTPWGKPTKGKKTRTNKSTD).

It belongs to the universal ribosomal protein uL2 family. As to quaternary structure, part of the 50S ribosomal subunit. Forms a bridge to the 30S subunit in the 70S ribosome.

One of the primary rRNA binding proteins. Required for association of the 30S and 50S subunits to form the 70S ribosome, for tRNA binding and peptide bond formation. It has been suggested to have peptidyltransferase activity; this is somewhat controversial. Makes several contacts with the 16S rRNA in the 70S ribosome. The protein is Large ribosomal subunit protein uL2 of Bradyrhizobium sp. (strain BTAi1 / ATCC BAA-1182).